Reading from the N-terminus, the 268-residue chain is Peptide transport system ATP-binding protein SapF (268 aa).

Residues 6-251 enclose the ABC transporter domain; that stretch reads LEVRNLSKTF…PLHELTRRLI (246 aa). 47 to 54 serves as a coordination point for ATP; that stretch reads GENGSGKS.

It belongs to the ABC transporter superfamily.

The protein resides in the cell inner membrane. Involved in a peptide intake transport system that plays a role in the resistance to antimicrobial peptides. This Salmonella typhimurium (strain LT2 / SGSC1412 / ATCC 700720) protein is Peptide transport system ATP-binding protein SapF.